An 882-amino-acid chain; its full sequence is DNA mismatch repair protein MutS (882 aa).

640–647 (GPNMGGKS) provides a ligand contact to ATP.

This sequence belongs to the DNA mismatch repair MutS family.

This protein is involved in the repair of mismatches in DNA. It is possible that it carries out the mismatch recognition step. This protein has a weak ATPase activity. This chain is DNA mismatch repair protein MutS, found in Albidiferax ferrireducens (strain ATCC BAA-621 / DSM 15236 / T118) (Rhodoferax ferrireducens).